A 256-amino-acid chain; its full sequence is MAVGKNKRLSKGKKGLKKKVVDPFTRKDWFDIKAPTTFENRNVGKTLINRSTGLKNAADGLKGRVFEVCLADLQGSEDHSYRKIKLRVDEVQGKNLLTNFHGLDFTSDKLRSLVRKWQSLVEANVTVKTSDDYVLRVFAIAFTKRQPNQIKKTTYAQSSKLREVRKKMIEIMQREVSNCTLAQLTSKLIPEVIGREIEKSTQTIFPLQNVHIRKVKLLKQPKFDLGSLLALHGEGSTEEKGKKVSSGFKDVVLESV.

Ala2 is subject to N-acetylalanine; partial.

This sequence belongs to the eukaryotic ribosomal protein eS1 family. Component of the small ribosomal subunit. Mature ribosomes consist of a small (40S) and a large (60S) subunit. The 40S subunit contains about 33 different proteins and 1 molecule of RNA (18S). The 60S subunit contains about 49 different proteins and 3 molecules of RNA (25S, 5.8S and 5S).

The protein resides in the cytoplasm. This is Small ribosomal subunit protein eS1 from Candida albicans (strain SC5314 / ATCC MYA-2876) (Yeast).